The sequence spans 154 residues: 6,7-dimethyl-8-ribityllumazine synthase (154 aa).

5-amino-6-(D-ribitylamino)uracil-binding positions include Phe-26, 60–62 (ALE), and 84–86 (CII). 89 to 90 (ET) serves as a coordination point for (2S)-2-hydroxy-3-oxobutyl phosphate. The active-site Proton donor is His-92. Residue Asn-117 coordinates 5-amino-6-(D-ribitylamino)uracil. Arg-131 is a binding site for (2S)-2-hydroxy-3-oxobutyl phosphate.

This sequence belongs to the DMRL synthase family.

The catalysed reaction is (2S)-2-hydroxy-3-oxobutyl phosphate + 5-amino-6-(D-ribitylamino)uracil = 6,7-dimethyl-8-(1-D-ribityl)lumazine + phosphate + 2 H2O + H(+). Its pathway is cofactor biosynthesis; riboflavin biosynthesis; riboflavin from 2-hydroxy-3-oxobutyl phosphate and 5-amino-6-(D-ribitylamino)uracil: step 1/2. Its function is as follows. Catalyzes the formation of 6,7-dimethyl-8-ribityllumazine by condensation of 5-amino-6-(D-ribitylamino)uracil with 3,4-dihydroxy-2-butanone 4-phosphate. This is the penultimate step in the biosynthesis of riboflavin. This chain is 6,7-dimethyl-8-ribityllumazine synthase, found in Acidovorax sp. (strain JS42).